The chain runs to 602 residues: FAD-binding monooxygenase hmp7 (602 aa).

Residues 108-111 (TWYW), 120-121 (DV), and tyrosine 126 contribute to the FAD site. Residue 118–120 (QCD) coordinates NADP(+). NADP(+)-binding positions include 252-258 (TGATAVQ) and 275-276 (RT).

It belongs to the FAD-binding monooxygenase family. The cofactor is FAD.

Its pathway is secondary metabolite biosynthesis. Functionally, FAD-binding monooxygenase; part of the gene cluster that mediates the biosynthesis of hypothemycin, a resorcylic acid lactone (RAL) that irreversibly inhibits a subset of protein kinases with a conserved cysteine in the ATP binding site such as human ERK2. The first step is performed by both PKSs hmp3 and hmp8 and leads to the production of 7',8'-dehydrozearalenol (DHZ). The highly reducing PKS hpm8 synthesizes the reduced hexaketide (7S,11S,2E,8E)-7,11-dihydroxy-dodeca-2,8-dienoate, which is transferred downstream to the non-reducing PKS hpm3. Hpm3 then extends the reduced hexaketide to a nonaketide, after which regioselective cyclization and macrolactonization affords DHZ. The next step is the conversion of DHZ into aigialomycin C and is performed by the O-methyltransferase hmp5, the FAD-binding monooxygenase hmp7, and the cytochrome P450 monooxygenase hmp1. The wide substrate tolerance of the hmp5 and hmp7 implies that the reactions from DHZ to aigialomycin C can occur in any order. The steps from aigialomycin C to hypothemycin are less well established. The FAD-linked oxidoreductase hmp9 presumably catalyzes oxidation of the C-6' hydroxyl to a ketone. The timing of this oxidation is important, since the resulting enone functional group is a Michael acceptor that can react spontaneously with glutathione, an abundant metabolite in fungal cells. The glutathione S-transferase hmp2 catalyzes cis-trans isomerization of the 7',8' double bond with equilibrium favoring the trans isomer. The hpm6-encoded transporter might preferentially pump hypothemycin out of the cell relative to the trans isomer aigialomycin A. The cis-to-trans isomerization may be coupled with C-4' hydroxylation, since all known hypothemycin analogs containing the enone functional group also have hydroxyl groups at both C-4' and C-5'. The sequence is that of FAD-binding monooxygenase hmp7 from Hypomyces subiculosus (Nectria subiculosa).